A 110-amino-acid polypeptide reads, in one-letter code: UPF0145 protein MTH_507 (110 aa).

The protein belongs to the UPF0145 family.

The sequence is that of UPF0145 protein MTH_507 from Methanothermobacter thermautotrophicus (strain ATCC 29096 / DSM 1053 / JCM 10044 / NBRC 100330 / Delta H) (Methanobacterium thermoautotrophicum).